Here is a 537-residue protein sequence, read N- to C-terminus: uncharacterized protein (537 aa).

Residues 1–15 form the signal peptide; sequence MALFQLFSFLNVTLG. The next 2 membrane-spanning stretches (helical) occupy residues 459–479 and 490–510; these read VLFS…GCCF and VILL…LGFT.

It localises to the host membrane. This is an uncharacterized protein from Citrus sinensis (Sweet orange).